We begin with the raw amino-acid sequence, 396 residues long: Acetate kinase (396 aa).

Asparagine 7 contributes to the Mg(2+) binding site. Lysine 14 is an ATP binding site. Arginine 89 provides a ligand contact to substrate. Aspartate 146 acts as the Proton donor/acceptor in catalysis. ATP-binding positions include histidine 206–glycine 210, aspartate 280–arginine 282, and glycine 328–asparagine 332. Residue glutamate 382 coordinates Mg(2+).

The protein belongs to the acetokinase family. As to quaternary structure, homodimer. Requires Mg(2+) as cofactor. The cofactor is Mn(2+).

It is found in the cytoplasm. The catalysed reaction is acetate + ATP = acetyl phosphate + ADP. It participates in metabolic intermediate biosynthesis; acetyl-CoA biosynthesis; acetyl-CoA from acetate: step 1/2. In terms of biological role, catalyzes the formation of acetyl phosphate from acetate and ATP. Can also catalyze the reverse reaction. The protein is Acetate kinase of Maridesulfovibrio salexigens (strain ATCC 14822 / DSM 2638 / NCIMB 8403 / VKM B-1763) (Desulfovibrio salexigens).